Consider the following 136-residue polypeptide: Small ribosomal subunit protein uS19 (136 aa).

A disordered region spans residues 114 to 136; the sequence is RSRVSHGSAGVGATRSSKFVPLK.

It belongs to the universal ribosomal protein uS19 family.

Functionally, protein S19 forms a complex with S13 that binds strongly to the 16S ribosomal RNA. This chain is Small ribosomal subunit protein uS19, found in Methanosarcina acetivorans (strain ATCC 35395 / DSM 2834 / JCM 12185 / C2A).